The following is a 182-amino-acid chain: Constitutive photomorphogenesis protein 10 (182 aa).

In terms of domain architecture, UBC core spans 36-182; the sequence is ASGKRIQREM…AKEWTLRFAK (147 aa).

It belongs to the ubiquitin-conjugating enzyme family. Component of the CDD complex, at least composed of COP10, DET1 and DDB1A. Interacts with E3 ubiquitin ligase COP1. Interacts with E2 ubiquitin conjugating UBC5. Interacts with CSN3, CSN4 and CSN8 subunits of the COP9 complex. As to expression, expressed in flower, leaf, stem and seedling. Expressed at lower level in root.

The protein resides in the nucleus. In terms of biological role, component of light signal transduction machinery. Involved in repression of photomorphogenesis in darkness by participating in the CDD complex, a complex probably required to regulate the activity of ubiquitin conjugating enzymes (E2s). Repression of photomorphogenesis is probably mediated by ubiquitination and subsequent degradation of photomorphogenesis-promoting factors such as HY5, HYH and LAF1. Although strongly related to ubiquitin-conjugating enzyme, it has no catalytic activity by itself due to the absence of the conserved Cys active site at position 120. It can however enhance the activity of E2 conjugating enzymes. The polypeptide is Constitutive photomorphogenesis protein 10 (COP10) (Arabidopsis thaliana (Mouse-ear cress)).